The primary structure comprises 262 residues: Ribosomal RNA small subunit methyltransferase A (262 aa).

6 residues coordinate S-adenosyl-L-methionine: His16, Leu18, Gly43, Glu64, Asp89, and Asn109.

This sequence belongs to the class I-like SAM-binding methyltransferase superfamily. rRNA adenine N(6)-methyltransferase family. RsmA subfamily.

It localises to the cytoplasm. The enzyme catalyses adenosine(1518)/adenosine(1519) in 16S rRNA + 4 S-adenosyl-L-methionine = N(6)-dimethyladenosine(1518)/N(6)-dimethyladenosine(1519) in 16S rRNA + 4 S-adenosyl-L-homocysteine + 4 H(+). Specifically dimethylates two adjacent adenosines (A1518 and A1519) in the loop of a conserved hairpin near the 3'-end of 16S rRNA in the 30S particle. May play a critical role in biogenesis of 30S subunits. The polypeptide is Ribosomal RNA small subunit methyltransferase A (Xanthomonas campestris pv. campestris (strain 8004)).